Reading from the N-terminus, the 124-residue chain is Small ribosomal subunit protein bS6 (124 aa).

The disordered stretch occupies residues 96-124 (ETAPSPMMKEVQREEARKAAQTTTEGQPA). The span at 115 to 124 (AQTTTEGQPA) shows a compositional bias: polar residues.

The protein belongs to the bacterial ribosomal protein bS6 family.

Binds together with bS18 to 16S ribosomal RNA. This chain is Small ribosomal subunit protein bS6, found in Cupriavidus metallidurans (strain ATCC 43123 / DSM 2839 / NBRC 102507 / CH34) (Ralstonia metallidurans).